We begin with the raw amino-acid sequence, 111 residues long: Large ribosomal subunit protein P2-2 (111 aa).

Residues 86–111 are disordered; sequence APAAAAAKKDEPEEEADDDMGFGLFD.

Belongs to the eukaryotic ribosomal protein P1/P2 family. As to quaternary structure, P1 and P2 exist as dimers at the large ribosomal subunit. Phosphorylated.

Functionally, plays an important role in the elongation step of protein synthesis. The chain is Large ribosomal subunit protein P2-2 (LIP') from Leishmania infantum.